Reading from the N-terminus, the 614-residue chain is 4-hydroxy-3-methylbut-2-en-1-yl diphosphate synthase (flavodoxin) (614 aa).

The [4Fe-4S] cluster site is built by Cys522, Cys525, Cys556, and Glu563.

This sequence belongs to the IspG family. It depends on [4Fe-4S] cluster as a cofactor.

The catalysed reaction is (2E)-4-hydroxy-3-methylbut-2-enyl diphosphate + oxidized [flavodoxin] + H2O + 2 H(+) = 2-C-methyl-D-erythritol 2,4-cyclic diphosphate + reduced [flavodoxin]. It participates in isoprenoid biosynthesis; isopentenyl diphosphate biosynthesis via DXP pathway; isopentenyl diphosphate from 1-deoxy-D-xylulose 5-phosphate: step 5/6. Converts 2C-methyl-D-erythritol 2,4-cyclodiphosphate (ME-2,4cPP) into 1-hydroxy-2-methyl-2-(E)-butenyl 4-diphosphate. This Phocaeicola vulgatus (strain ATCC 8482 / DSM 1447 / JCM 5826 / CCUG 4940 / NBRC 14291 / NCTC 11154) (Bacteroides vulgatus) protein is 4-hydroxy-3-methylbut-2-en-1-yl diphosphate synthase (flavodoxin).